The sequence spans 440 residues: MSSSTHHWIARRGTALQGSLAIPGDKSVSHRAVMFAALADGVSQIDGFLEGEDTRSTAAIFAKLGVRIETPSASQRIVHGVGVDGLQPPTEALDCGNAGTGMRLLAGLLAAQRFDSVLVGDESLSKRPMRRVTGPLAQMGARIETQDDGTPPLHVHGGQALHGIDFVSPVASAQVKSAVLLAGLYAQGETSVTEPHPTRDYTERMLSAFGVEIDFSPGKARLRGGQRLRATDIAVPADFSSAAFFIVAASIVPGSEVVLRAVGLNPRRTGLLAALRLMGAEISEENHAEHGGEPVADLRVRYAPLRGAQIPEALVPDMIDEFPALFVAAAAASGQTVVTGAAELRVKESDRLAAMATGLRTLGVQVDETPDGATIHGGSIGSGVIESHGDHRIAMAFAIAGQLSTGQVQVNDVANVATSFPGFDTLAQGAGFGLETAGRR.

3 residues coordinate 3-phosphoshikimate: Lys-26, Ser-27, and Arg-31. Lys-26 is a binding site for phosphoenolpyruvate. Residues Gly-99 and Arg-127 each coordinate phosphoenolpyruvate. 3-phosphoshikimate contacts are provided by Ser-172, Gln-174, Asp-320, and Lys-347. Gln-174 provides a ligand contact to phosphoenolpyruvate. The Proton acceptor role is filled by Asp-320. Residues Arg-351 and Arg-392 each contribute to the phosphoenolpyruvate site.

This sequence belongs to the EPSP synthase family. Monomer.

It is found in the cytoplasm. It carries out the reaction 3-phosphoshikimate + phosphoenolpyruvate = 5-O-(1-carboxyvinyl)-3-phosphoshikimate + phosphate. The protein operates within metabolic intermediate biosynthesis; chorismate biosynthesis; chorismate from D-erythrose 4-phosphate and phosphoenolpyruvate: step 6/7. Catalyzes the transfer of the enolpyruvyl moiety of phosphoenolpyruvate (PEP) to the 5-hydroxyl of shikimate-3-phosphate (S3P) to produce enolpyruvyl shikimate-3-phosphate and inorganic phosphate. The chain is 3-phosphoshikimate 1-carboxyvinyltransferase from Xanthomonas euvesicatoria pv. vesicatoria (strain 85-10) (Xanthomonas campestris pv. vesicatoria).